The chain runs to 116 residues: Large ribosomal subunit protein bL17 (116 aa).

The protein belongs to the bacterial ribosomal protein bL17 family. Part of the 50S ribosomal subunit. Contacts protein L32.

The sequence is that of Large ribosomal subunit protein bL17 from Prochlorococcus marinus (strain SARG / CCMP1375 / SS120).